Here is a 108-residue protein sequence, read N- to C-terminus: Small ribosomal subunit protein eS25B (108 aa).

A compositionally biased stretch (low complexity) spans methionine 1–glycine 20. Residues methionine 1–lysine 30 form a disordered region. Proline 2 carries the n,N-dimethylproline; by NTM1 modification. Residues lysine 21–lysine 30 are compositionally biased toward basic residues.

It belongs to the eukaryotic ribosomal protein eS25 family. Component of the small ribosomal subunit (SSU). Mature yeast ribosomes consist of a small (40S) and a large (60S) subunit. The 40S small subunit contains 1 molecule of ribosomal RNA (18S rRNA) and 33 different proteins (encoded by 57 genes). The large 60S subunit contains 3 rRNA molecules (25S, 5.8S and 5S rRNA) and 46 different proteins (encoded by 81 genes).

It localises to the cytoplasm. In terms of biological role, component of the ribosome, a large ribonucleoprotein complex responsible for the synthesis of proteins in the cell. The small ribosomal subunit (SSU) binds messenger RNAs (mRNAs) and translates the encoded message by selecting cognate aminoacyl-transfer RNA (tRNA) molecules. The large subunit (LSU) contains the ribosomal catalytic site termed the peptidyl transferase center (PTC), which catalyzes the formation of peptide bonds, thereby polymerizing the amino acids delivered by tRNAs into a polypeptide chain. The nascent polypeptides leave the ribosome through a tunnel in the LSU and interact with protein factors that function in enzymatic processing, targeting, and the membrane insertion of nascent chains at the exit of the ribosomal tunnel. The chain is Small ribosomal subunit protein eS25B from Saccharomyces cerevisiae (strain ATCC 204508 / S288c) (Baker's yeast).